The chain runs to 284 residues: Bifunctional protein FolD (284 aa).

NADP(+) is bound at residue 166–168 (GAS).

This sequence belongs to the tetrahydrofolate dehydrogenase/cyclohydrolase family. Homodimer.

It carries out the reaction (6R)-5,10-methylene-5,6,7,8-tetrahydrofolate + NADP(+) = (6R)-5,10-methenyltetrahydrofolate + NADPH. It catalyses the reaction (6R)-5,10-methenyltetrahydrofolate + H2O = (6R)-10-formyltetrahydrofolate + H(+). It participates in one-carbon metabolism; tetrahydrofolate interconversion. Functionally, catalyzes the oxidation of 5,10-methylenetetrahydrofolate to 5,10-methenyltetrahydrofolate and then the hydrolysis of 5,10-methenyltetrahydrofolate to 10-formyltetrahydrofolate. This Nitrosococcus oceani (strain ATCC 19707 / BCRC 17464 / JCM 30415 / NCIMB 11848 / C-107) protein is Bifunctional protein FolD.